Here is an 82-residue protein sequence, read N- to C-terminus: Putative Fe(2+) transport protein A (82 aa).

Belongs to the FeoA family.

Functionally, might be involved in Fe(2+) ion uptake. This chain is Putative Fe(2+) transport protein A, found in Methanocaldococcus jannaschii (strain ATCC 43067 / DSM 2661 / JAL-1 / JCM 10045 / NBRC 100440) (Methanococcus jannaschii).